The chain runs to 470 residues: MRALRCSIIRGVAGLRMASSVLDEMKEQMLRRSKEDHKKIGDLRKKHGHEKLCDATIDAVYGGMRGITGLVYEPSLLDSAEGIRFRGLTILECQEMLPKAPGGKEPLPEAMFWLLMTGEVPTEEQARGLNAELHRRVDPEAIAAAQKAIAALPKNAHPMTAFSVGVLALQTYSKFAAAYAAGKSNKKTYWEYALEDSLDMLARTPAVAAMIYNRETKGQVELAAPSNSDLDWAANFAKMLGFQDEEFRECMRLYLSVHADHEGGNVSAHTTTLVASALSDPYLAFSAGLNGLAGPLHGLANQEVLKYLFSMQERVKADGVNVHDEAALEKALTKYTWELLNSGQVVPGYGHAVLRKVDPRYTCQRNFCLRHNFQDDLFKLVNTIYMIMPGILKEHGKTKNPYPNVDAHSGVLLQHYGLTEQNYYTVLFGLSRQMGVLAGVVWDRLQGRPLERPKSITTEMLAKKYLCNSL.

Catalysis depends on residues H297, H351, and D406.

It belongs to the citrate synthase family. Homodimer.

The protein localises to the mitochondrion matrix. It carries out the reaction oxaloacetate + acetyl-CoA + H2O = citrate + CoA + H(+). It participates in carbohydrate metabolism; tricarboxylic acid cycle; isocitrate from oxaloacetate: step 1/2. This is Probable citrate synthase, mitochondrial from Leishmania infantum.